Consider the following 147-residue polypeptide: MADNDNEDVIMDDLVEEYVETEEENFVDSEEESEDKDEIVESPSICEGFVQASSQTLVIIPDNERITSNVLTTFEATRLVAVRAQQLAINGSTMLKKKYSSPIDIAKQELFNRKIPLLVMRCIKVTPDGQKIVEIWNPREMGIPLLD.

It belongs to the archaeal RpoK/eukaryotic RPB6 RNA polymerase subunit family. In terms of assembly, part of the viral DNA-directed RNA polymerase that consists of 8 polII-like subunits (RPB1, RPB2, RPB3, RPB5, RPB6, RPB7, RPB9, RPB10), a capping enzyme and a termination factor.

It is found in the host cytoplasm. The protein localises to the virion. Its function is as follows. Component of the DNA-directed RNA polymerase (RNAP) that catalyzes the transcription in the cytoplasm of viral DNA into RNA using the four ribonucleoside triphosphates as substrates. The protein is DNA-directed RNA polymerase subunit 6 homolog of Ornithodoros (relapsing fever ticks).